Consider the following 300-residue polypeptide: Enoyl-CoA hydratase domain-containing protein 3, mitochondrial (300 aa).

The N-terminal 66 residues, Met-1–Arg-66, are a transit peptide targeting the mitochondrion. Residues Ser-32 to Asp-54 form a disordered region. Lys-110 carries the post-translational modification N6-succinyllysine.

This sequence belongs to the enoyl-CoA hydratase/isomerase family.

It is found in the mitochondrion. Functionally, may play a role in fatty acid biosynthesis and insulin sensitivity. This chain is Enoyl-CoA hydratase domain-containing protein 3, mitochondrial, found in Rattus norvegicus (Rat).